The following is a 1381-amino-acid chain: DNA-directed RNA polymerase subunit beta (1381 aa).

This sequence belongs to the RNA polymerase beta chain family. In terms of assembly, the RNAP catalytic core consists of 2 alpha, 1 beta, 1 beta' and 1 omega subunit. When a sigma factor is associated with the core the holoenzyme is formed, which can initiate transcription.

It carries out the reaction RNA(n) + a ribonucleoside 5'-triphosphate = RNA(n+1) + diphosphate. DNA-dependent RNA polymerase catalyzes the transcription of DNA into RNA using the four ribonucleoside triphosphates as substrates. The chain is DNA-directed RNA polymerase subunit beta from Halorhodospira halophila (strain DSM 244 / SL1) (Ectothiorhodospira halophila (strain DSM 244 / SL1)).